Here is a 305-residue protein sequence, read N- to C-terminus: Myb-like transcriptional regulator basR (305 aa).

Myb-like domains are found at residues 5 to 59, 60 to 110, and 111 to 162; these read RRRW…YNRF, TGGL…HHCL, and NPEL…TILS. The segment at 175 to 215 is disordered; that stretch reads PCCDSPSPSKSSRRPPSTPTSTPQVPGSRQGSSYDPYDYGS. The span at 198-207 shows a compositional bias: polar residues; that stretch reads QVPGSRQGSS.

It localises to the nucleus. Its function is as follows. Transcription regulator that acts as a central regulatory node for the integration of external bacterial signals leading to the regulation of secondary metabolite gene clusters such as orsellinic, lecanoric acid, cichorine, 2,4-dihydroxy-3-methyl-6-(2-oxopropyl)benzaldehyde (dba), emericellamide or microperfuranone clusters. This chain is Myb-like transcriptional regulator basR, found in Emericella nidulans (strain FGSC A4 / ATCC 38163 / CBS 112.46 / NRRL 194 / M139) (Aspergillus nidulans).